The sequence spans 329 residues: Acetyl-coenzyme A carboxylase carboxyl transferase subunit alpha (329 aa).

Residues 40 to 294 (QLETLAARRR…REAIERHLDD (255 aa)) enclose the CoA carboxyltransferase C-terminal domain.

It belongs to the AccA family. In terms of assembly, acetyl-CoA carboxylase is a heterohexamer composed of biotin carboxyl carrier protein (AccB), biotin carboxylase (AccC) and two subunits each of ACCase subunit alpha (AccA) and ACCase subunit beta (AccD).

It localises to the cytoplasm. It carries out the reaction N(6)-carboxybiotinyl-L-lysyl-[protein] + acetyl-CoA = N(6)-biotinyl-L-lysyl-[protein] + malonyl-CoA. The protein operates within lipid metabolism; malonyl-CoA biosynthesis; malonyl-CoA from acetyl-CoA: step 1/1. Component of the acetyl coenzyme A carboxylase (ACC) complex. First, biotin carboxylase catalyzes the carboxylation of biotin on its carrier protein (BCCP) and then the CO(2) group is transferred by the carboxyltransferase to acetyl-CoA to form malonyl-CoA. This chain is Acetyl-coenzyme A carboxylase carboxyl transferase subunit alpha, found in Prochlorococcus marinus (strain MIT 9303).